The chain runs to 511 residues: 2-isopropylmalate synthase (511 aa).

Positions Ile4 to Lys266 constitute a Pyruvate carboxyltransferase domain. Residues Asp13, His201, His203, and Asn237 each coordinate Mn(2+). A regulatory domain region spans residues Glu392–Val511.

Belongs to the alpha-IPM synthase/homocitrate synthase family. LeuA type 1 subfamily. As to quaternary structure, homodimer. It depends on Mn(2+) as a cofactor.

The protein localises to the cytoplasm. It carries out the reaction 3-methyl-2-oxobutanoate + acetyl-CoA + H2O = (2S)-2-isopropylmalate + CoA + H(+). It participates in amino-acid biosynthesis; L-leucine biosynthesis; L-leucine from 3-methyl-2-oxobutanoate: step 1/4. Catalyzes the condensation of the acetyl group of acetyl-CoA with 3-methyl-2-oxobutanoate (2-ketoisovalerate) to form 3-carboxy-3-hydroxy-4-methylpentanoate (2-isopropylmalate). This Lysinibacillus sphaericus (strain C3-41) protein is 2-isopropylmalate synthase.